The sequence spans 79 residues: Cell division protein ZapB (79 aa).

A coiled-coil region spans residues 4–78 (EVFEKLESKV…LRALLGKMEE (75 aa)).

Belongs to the ZapB family. Homodimer. The ends of the coiled-coil dimer bind to each other, forming polymers. Interacts with FtsZ.

The protein localises to the cytoplasm. Functionally, non-essential, abundant cell division factor that is required for proper Z-ring formation. It is recruited early to the divisome by direct interaction with FtsZ, stimulating Z-ring assembly and thereby promoting cell division earlier in the cell cycle. Its recruitment to the Z-ring requires functional FtsA or ZipA. This chain is Cell division protein ZapB, found in Serratia proteamaculans (strain 568).